We begin with the raw amino-acid sequence, 286 residues long: 4-diphosphocytidyl-2-C-methyl-D-erythritol kinase (286 aa).

Lysine 11 is an active-site residue. 93–103 (PFGAGLGGGSS) is a binding site for ATP. Aspartate 135 is an active-site residue.

It belongs to the GHMP kinase family. IspE subfamily.

It carries out the reaction 4-CDP-2-C-methyl-D-erythritol + ATP = 4-CDP-2-C-methyl-D-erythritol 2-phosphate + ADP + H(+). Its pathway is isoprenoid biosynthesis; isopentenyl diphosphate biosynthesis via DXP pathway; isopentenyl diphosphate from 1-deoxy-D-xylulose 5-phosphate: step 3/6. Catalyzes the phosphorylation of the position 2 hydroxy group of 4-diphosphocytidyl-2C-methyl-D-erythritol. The protein is 4-diphosphocytidyl-2-C-methyl-D-erythritol kinase of Chlorobaculum tepidum (strain ATCC 49652 / DSM 12025 / NBRC 103806 / TLS) (Chlorobium tepidum).